A 158-amino-acid chain; its full sequence is 2-C-methyl-D-erythritol 2,4-cyclodiphosphate synthase (158 aa).

2 residues coordinate a divalent metal cation: D9 and H11. 4-CDP-2-C-methyl-D-erythritol 2-phosphate-binding positions include 9-11 and 35-36; these read DVH and HS. H43 is a binding site for a divalent metal cation. 4-CDP-2-C-methyl-D-erythritol 2-phosphate is bound by residues 57 to 59, 62 to 66, 133 to 136, F140, and R143; these read DIG, FPDTD, and TTTE.

The protein belongs to the IspF family. Homotrimer. The cofactor is a divalent metal cation.

It carries out the reaction 4-CDP-2-C-methyl-D-erythritol 2-phosphate = 2-C-methyl-D-erythritol 2,4-cyclic diphosphate + CMP. It participates in isoprenoid biosynthesis; isopentenyl diphosphate biosynthesis via DXP pathway; isopentenyl diphosphate from 1-deoxy-D-xylulose 5-phosphate: step 4/6. Involved in the biosynthesis of isopentenyl diphosphate (IPP) and dimethylallyl diphosphate (DMAPP), two major building blocks of isoprenoid compounds. Catalyzes the conversion of 4-diphosphocytidyl-2-C-methyl-D-erythritol 2-phosphate (CDP-ME2P) to 2-C-methyl-D-erythritol 2,4-cyclodiphosphate (ME-CPP) with a corresponding release of cytidine 5-monophosphate (CMP). This is 2-C-methyl-D-erythritol 2,4-cyclodiphosphate synthase from Actinobacillus pleuropneumoniae serotype 7 (strain AP76).